The sequence spans 274 residues: Large ribosomal subunit protein uL2cz/uL2cy (274 aa).

Disordered stretches follow at residues 1–21 and 224–252; these read MAIH…VDSQ and NPVD…GYPA.

The protein belongs to the universal ribosomal protein uL2 family. In terms of assembly, part of the 50S ribosomal subunit.

Its subcellular location is the plastid. It localises to the chloroplast. The chain is Large ribosomal subunit protein uL2cz/uL2cy (rpl2-A) from Olimarabidopsis pumila (Dwarf rocket).